The sequence spans 1130 residues: Serine/threonine-protein kinase LATS1 (1130 aa).

A compositionally biased stretch (basic and acidic residues) spans 1-11 (MKRSEKPEGYR). Residues 1 to 71 (MKRSEKPEGY…PRQVRNPPKF (71 aa)) are disordered. A compositionally biased stretch (polar residues) spans 19 to 30 (PASNYTVSSRQM). The span at 46–64 (DAAKAEHNMSKMSTEDPRQ) shows a compositional bias: basic and acidic residues. A UBA domain is found at 100 to 141 (EVNPQMLQDLQAAGFDEDMVIQALQKTNNRSIEAAIEFISKM). The tract at residues 149–276 (EQMAAAAARP…SWEPNSQTKR (128 aa)) is disordered. Positions 167 to 179 (NVQQSVNRKQSWK) are enriched in polar residues. Residues 235 to 268 (NPPPPPQVRSVTPPPPPRGQTPPPRGTTPPPPSW) show a composition bias toward pro residues. Residue T246 is modified to Phosphothreonine. S278 carries the phosphoserine modification. Disordered regions lie at residues 294-321 (GAWQ…RGIS), 365-405 (AGTV…NGSI), 432-484 (NWPQ…PSAT), and 515-631 (THPS…ESRI). Pro residues predominate over residues 300 to 312 (YPPPPLNTSPMNP). Residues 373–376 (PPPY) carry the PPxY motif 1 motif. The segment covering 381 to 405 (ANGQSPSALQTGGSAAPSSYTNGSI) has biased composition (polar residues). Residues 434–447 (PQSSSAPAQSSPSS) are compositionally biased toward low complexity. The span at 454–482 (WQPNIPVRSNSFNNPLGNRASHSANSQPS) shows a compositional bias: polar residues. S464 carries the post-translational modification Phosphoserine; by NUAK1 and NUAK2. Residues 526–655 (TVQPSPFPEG…HVENVLKSHQ (130 aa)) are interaction with YAP1. Positions 556–559 (PPPY) match the PPxY motif 2 motif. A compositionally biased stretch (basic and acidic residues) spans 579–609 (PSKEDQPSLPKEDESEKSYENVDSGDKEKKQ). S613 is subject to Phosphoserine. Positions 621 to 630 (KKDEERRESR) are enriched in basic and acidic residues. Position 674 is a phosphoserine (S674). The Protein kinase domain occupies 705 to 1010 (FVKIKTLGIG…ADEIKAHPFF (306 aa)). Residues 711–719 (LGIGAFGEV) and K734 each bind ATP. D828 functions as the Proton acceptor in the catalytic mechanism. A Phosphoserine; by STK3/MST2 modification is found at S909. The region spanning 1011–1090 (KTIDFSSDLR…RRFFDDNGYP (80 aa)) is the AGC-kinase C-terminal domain. T1079 is subject to Phosphothreonine; by STK3/MST2. Residues 1104-1130 (SQGSEQQSDEDDQNTGSEIKNRDLVYV) are disordered.

It belongs to the protein kinase superfamily. AGC Ser/Thr protein kinase family. In terms of assembly, complexes with CDK1 in early mitosis. LATS1-associated CDK1 has no mitotic cyclin partner and no apparent kinase activity. Binds phosphorylated ZYX, locating this protein to the mitotic spindle and suggesting a role for actin regulatory proteins during mitosis. Binds to and colocalizes with LIMK1 at the actomyosin contractile ring during cytokinesis. Interacts (via PPxY motif 2) with YAP1 (via WW domains). Interacts with MOB1A and MOB1B. Interacts with LIMD1, WTIP and AJUBA. Interacts with ESR1, DCAF1 and DCAF13; probably recruits DCAF1 and DCAF13 to ESR1 to promote ESR1 ubiquitination and ubiquitin-mediated proteasomal degradation. Interacts with STK3/MST2; this interaction is inhibited in the presence of DLG5. Interacts with SCRIB in the presence of DLG5. Interacts with WWTR1/TAZ. Interacts with WWC1, WWC2 and WWC3 (via their WW domains). Requires Mg(2+) as cofactor. Post-translationally, autophosphorylated and phosphorylated during M-phase of the cell cycle. Phosphorylated by STK3/MST2 at Ser-909 and Thr-1079, which results in its activation. Phosphorylated by MAP4Ks; in parallel to STK3/MST2 and resulting to its activation. Phosphorylation at Ser-464 by NUAK1 and NUAK2 leads to decreased protein level and is required to regulate cellular senescence and cellular ploidy. As to expression, expressed in all adult tissues examined except for lung and kidney.

It is found in the cytoplasm. The protein resides in the cytoskeleton. It localises to the microtubule organizing center. Its subcellular location is the centrosome. The protein localises to the spindle. It is found in the midbody. The protein resides in the spindle pole body. The catalysed reaction is L-seryl-[protein] + ATP = O-phospho-L-seryl-[protein] + ADP + H(+). It catalyses the reaction L-threonyl-[protein] + ATP = O-phospho-L-threonyl-[protein] + ADP + H(+). In terms of biological role, negative regulator of YAP1 in the Hippo signaling pathway that plays a pivotal role in organ size control and tumor suppression by restricting proliferation and promoting apoptosis. The core of this pathway is composed of a kinase cascade wherein STK3/MST2 and STK4/MST1, in complex with its regulatory protein SAV1, phosphorylates and activates LATS1/2 in complex with its regulatory protein MOB1, which in turn phosphorylates and inactivates YAP1 oncoprotein and WWTR1/TAZ. Phosphorylation of YAP1 by LATS1 inhibits its translocation into the nucleus to regulate cellular genes important for cell proliferation, cell death, and cell migration. Acts as a tumor suppressor which plays a critical role in maintenance of ploidy through its actions in both mitotic progression and the G1 tetraploidy checkpoint. Negatively regulates G2/M transition by down-regulating CDK1 kinase activity. Involved in the control of p53 expression. Affects cytokinesis by regulating actin polymerization through negative modulation of LIMK1. May also play a role in endocrine function. Plays a role in mammary gland epithelial cell differentiation, both through the Hippo signaling pathway and the intracellular estrogen receptor signaling pathway by promoting the degradation of ESR1. Acts as an activator of the NLRP3 inflammasome by mediating phosphorylation of 'Ser-265' of NLRP3 following NLRP3 palmitoylation, promoting NLRP3 activation by NEK7. This is Serine/threonine-protein kinase LATS1 from Homo sapiens (Human).